Here is a 303-residue protein sequence, read N- to C-terminus: MSSRPPASFSATFSAARSSKCVPPPRRPSTDVSLPSLRDTIQAHGLDAKKSLGQHFLLDPGICARIAALGGDLTGRSVVEIGPGPGGLTRALLDTPASRVDVVEIDERAWPLLDELATYYPDRLHVVRQDALKLDAATLAPAPRQIIANLPYNVATPLLVGWLRQASQWERLSLMFQLEVAERICAAPGSSAYGRLAVLSQWCASCSVALRIPPAAFSPPPKVHSAVAVIIPHAEQPSPQLFRAMEQVTAAAFGQRRKMLRSSLKSIGGERLLEQAEIEPTRRAETLSVAEFARLAELNLASR.

A compositionally biased stretch (low complexity) spans 1–19; sequence MSSRPPASFSATFSAARSS. Positions 1–34 are disordered; that stretch reads MSSRPPASFSATFSAARSSKCVPPPRRPSTDVSL. S-adenosyl-L-methionine is bound by residues H55, L57, G82, E104, D130, and N149.

This sequence belongs to the class I-like SAM-binding methyltransferase superfamily. rRNA adenine N(6)-methyltransferase family. RsmA subfamily.

It localises to the cytoplasm. It carries out the reaction adenosine(1518)/adenosine(1519) in 16S rRNA + 4 S-adenosyl-L-methionine = N(6)-dimethyladenosine(1518)/N(6)-dimethyladenosine(1519) in 16S rRNA + 4 S-adenosyl-L-homocysteine + 4 H(+). In terms of biological role, specifically dimethylates two adjacent adenosines (A1518 and A1519) in the loop of a conserved hairpin near the 3'-end of 16S rRNA in the 30S particle. May play a critical role in biogenesis of 30S subunits. The protein is Ribosomal RNA small subunit methyltransferase A of Gluconobacter oxydans (strain 621H) (Gluconobacter suboxydans).